An 85-amino-acid polypeptide reads, in one-letter code: COMM domain-containing protein 6 (85 aa).

Met-1 is subject to N-acetylmethionine. The COMM domain maps to Gln-18 to Val-85.

Belongs to the COMM domain-containing protein 6 family. In terms of assembly, component of the commander complex consisting of the CCC subcomplex and the retriever subcomplex. Component of the CCC (COMMD/CCDC22/CCDC93) subcomplex consisting of COMMD1, COMMD2, COMMD3, COMMD4, COMMD5, COMMD6, COMMD7, COMMD8, COMMD9, COMMD10, CCDC22 and CCDC93; within the complex forms a heterodimer with COMMD1. May form a homodimer with isoform 1. Interacts with RELA, RELB, NFKB1/p105. Does not interact with NFKBIB. Interacts with CCDC22, CCDC93, SCNN1B, CUL4A.

Its subcellular location is the nucleus. The protein resides in the cytoplasm. Scaffold protein in the commander complex that is essential for endosomal recycling of transmembrane cargos; the commander complex is composed of the CCC subcomplex and the retriever subcomplex. May modulate activity of cullin-RING E3 ubiquitin ligase (CRL) complexes. Down-regulates activation of NF-kappa-B. Inhibits TNF-induced NFKB1 activation. This is COMM domain-containing protein 6 (COMMD6) from Bos taurus (Bovine).